Consider the following 513-residue polypeptide: MILGICDGHNASSSLIKRDEILFAMSEERFTRKKNQRGFPEKSVDYILNKVKPDEINYVSVGGVFRRGERIKKLKEFQNRINKKFLYFYHHISHSYLFKLSDFKEALVISIDGGGDGLSFLASIANKNNLEIIAQSDLIDSVGDFYASITELLGFKPMEDEGKVMSLSSYEGEDDINLTTIDYIKELKSFKNYLGVIGYEATKALKKLIVSDKSQLSFEDKVRISKFAQRTLENIVLKAIDDLSNEYNIDNIVFVGGVAQNVKLNSKIAEKYNLFVPPFMGDEGLCLGASLADKRIDRININNTYFGYEIENERAEKILEELKNKLNDYKIEFVEERDIPEVIGNLILDNKVVCLSRGKMEFGPRALGNRSVIALPTKENKEKINKKLKRSWFMPFAPTILYDFIDDYLINPRYSPFMTQIFKVKENKIKEIEGVIHVDKTTRPQTLKKDSNKTFYGIIRYIYDSIGIPVVLNTSFNLHGEPIVCNEKDAINSFLKADFDALLLGNYLISKVK.

It belongs to the NodU/CmcH family.

This is an uncharacterized protein from Methanocaldococcus jannaschii (strain ATCC 43067 / DSM 2661 / JAL-1 / JCM 10045 / NBRC 100440) (Methanococcus jannaschii).